Here is a 326-residue protein sequence, read N- to C-terminus: Heat-inducible transcription repressor HrcA (326 aa).

This sequence belongs to the HrcA family.

Negative regulator of class I heat shock genes (grpE-dnaK-dnaJ and groELS operons). Prevents heat-shock induction of these operons. In Staphylococcus saprophyticus subsp. saprophyticus (strain ATCC 15305 / DSM 20229 / NCIMB 8711 / NCTC 7292 / S-41), this protein is Heat-inducible transcription repressor HrcA.